A 230-amino-acid chain; its full sequence is 5'-methylthioadenosine/S-adenosylhomocysteine nucleosidase (230 aa).

Glutamate 12 functions as the Proton acceptor in the catalytic mechanism. Substrate-binding positions include glycine 78, isoleucine 153, and 174 to 175 (ME). Aspartate 198 acts as the Proton donor in catalysis.

This sequence belongs to the PNP/UDP phosphorylase family. MtnN subfamily.

It catalyses the reaction S-adenosyl-L-homocysteine + H2O = S-(5-deoxy-D-ribos-5-yl)-L-homocysteine + adenine. It carries out the reaction S-methyl-5'-thioadenosine + H2O = 5-(methylsulfanyl)-D-ribose + adenine. The catalysed reaction is 5'-deoxyadenosine + H2O = 5-deoxy-D-ribose + adenine. The protein operates within amino-acid biosynthesis; L-methionine biosynthesis via salvage pathway; S-methyl-5-thio-alpha-D-ribose 1-phosphate from S-methyl-5'-thioadenosine (hydrolase route): step 1/2. Catalyzes the irreversible cleavage of the glycosidic bond in both 5'-methylthioadenosine (MTA) and S-adenosylhomocysteine (SAH/AdoHcy) to adenine and the corresponding thioribose, 5'-methylthioribose and S-ribosylhomocysteine, respectively. Also cleaves 5'-deoxyadenosine, a toxic by-product of radical S-adenosylmethionine (SAM) enzymes, into 5-deoxyribose and adenine. The chain is 5'-methylthioadenosine/S-adenosylhomocysteine nucleosidase from Shewanella denitrificans (strain OS217 / ATCC BAA-1090 / DSM 15013).